The primary structure comprises 305 residues: Porphobilinogen deaminase (305 aa).

Position 240 is an S-(dipyrrolylmethanemethyl)cysteine (Cys240).

Belongs to the HMBS family. Monomer. The cofactor is dipyrromethane.

It carries out the reaction 4 porphobilinogen + H2O = hydroxymethylbilane + 4 NH4(+). It functions in the pathway porphyrin-containing compound metabolism; protoporphyrin-IX biosynthesis; coproporphyrinogen-III from 5-aminolevulinate: step 2/4. Tetrapolymerization of the monopyrrole PBG into the hydroxymethylbilane pre-uroporphyrinogen in several discrete steps. The chain is Porphobilinogen deaminase (hemC) from Xylella fastidiosa (strain 9a5c).